The primary structure comprises 303 residues: Thioesterase poxG (303 aa).

The protein belongs to the lcsJ thioesterase family.

It functions in the pathway secondary metabolite biosynthesis. Its function is as follows. Thioesterase; part of the gene cluster that mediates the biosynthesis of oxaleimides, cytotoxic compounds containing an unusual disubstituted succinimide moiety. The first step of the pathway is provided by the HR-PKS poxF that serves in a new mode of collaborative biosynthesis with the PKS-NRPS poxE, by providing the olefin containing amino acid substrate via the synthesis of an ACP-bound dec-4-enoate. The cytochrome P450 monooxygenase poxM-catalyzed oxidation at the alpha-position creates the enzyme-bound 2-hydroxydec-4-enoyl-ACP thioester, which may be prone to spontaneous hydrolysis to yield 2-hydroxydec-4-enoic acid due to increased electrophilicity of the carbonyl. 2-hydroxydec-4-enoic acid can then be further oxidized by poxM to yield the alpha-ketoacid 2-oxodec-4-enoicacid, which is reductively aminated by the aminotransferase poxL to yield (S,E)-2-aminodec-4-enoic acid. The Hybrid PKS-NRPS synthetase poxE then performs condensation between the octaketide product of its PKS modules and the amino group of (S,E)-2-aminodec-4-enoic acid which is activated and incorporated by the adenylation domain. The resulting aminoacyl product can be cyclized by the Diels-Alderase PoxQ and reductively released by the reductive (R) domain of poxE to yield an aldehyde intermediate. The released aldehyde is then substrate for a Knoevenagel condensation by the hydrolyase poxO followed by an oxidation at the 5-position of the pyrrolidone ring. The presence of the olefin from the amino acid building block allows for migration of the substituted allyl group to occur. This allylic transposition reaction takes place in a conjugate addition, semipinacol-like fashion to yield a succinimide intermediate. Iterative two-electron oxidations of the C7 methyl of the succinimide intermediate to the carboxylic acid can be catalyzed by one of two remaining cytochrome P450 monooxygenasess poxC or poxD to yield oxaleimide A. Subsequent oxidation yields the maleimide scaffold oxaleimide I. Both oxaleimide A and oxaleimide I can undergo oxidative modifications in the decalin ring to yield the series of products oxaleimides B to H. The protein is Thioesterase poxG of Penicillium oxalicum.